Here is a 500-residue protein sequence, read N- to C-terminus: Lycopene beta cyclase, chloroplastic (500 aa).

Residues 1-81 (MDTLLKTPNN…ELPMYDPSKG (81 aa)) constitute a chloroplast transit peptide. 86–114 (LAVVGGGPAGLAVAQQVSEAGLSVCSIDP) serves as a coordination point for NAD(+).

It belongs to the lycopene cyclase family.

The protein localises to the plastid. The protein resides in the chloroplast. The enzyme catalyses a carotenoid psi-end group = a carotenoid beta-end derivative. Its pathway is carotenoid biosynthesis; beta-carotene biosynthesis. It functions in the pathway carotenoid biosynthesis; beta-zeacarotene biosynthesis. Its function is as follows. Catalyzes the double cyclization reaction which converts lycopene to beta-carotene and neurosporene to beta-zeacarotene. In Solanum lycopersicum (Tomato), this protein is Lycopene beta cyclase, chloroplastic (LCY1).